Here is a 95-residue protein sequence, read N- to C-terminus: Small ribosomal subunit protein bS6 (95 aa).

It belongs to the bacterial ribosomal protein bS6 family.

Binds together with bS18 to 16S ribosomal RNA. The polypeptide is Small ribosomal subunit protein bS6 (Corynebacterium kroppenstedtii (strain DSM 44385 / JCM 11950 / CIP 105744 / CCUG 35717)).